The following is a 188-amino-acid chain: MPKASDIKKNQAIEHNGKVYLIKDVYKSTSQGRAGGSIYRVRMYEVATGLKVDESFKADEMITLADFSRHQATFSYVDGDEYVFMDNEDYTPYNLHKDAIAEELPFVTETTEGIQVFTVNGQPVAIDLPASVDLVIVETDPSIKGASATARTKPATLSTGLVIQVPEYIASGEKIKVSTVDHKFMSRA.

The protein belongs to the elongation factor P family.

This Saccharophagus degradans (strain 2-40 / ATCC 43961 / DSM 17024) protein is Elongation factor P-like protein.